A 182-amino-acid polypeptide reads, in one-letter code: ATP synthase subunit delta (182 aa).

The protein belongs to the ATPase delta chain family. In terms of assembly, F-type ATPases have 2 components, F(1) - the catalytic core - and F(0) - the membrane proton channel. F(1) has five subunits: alpha(3), beta(3), gamma(1), delta(1), epsilon(1). F(0) has three main subunits: a(1), b(2) and c(10-14). The alpha and beta chains form an alternating ring which encloses part of the gamma chain. F(1) is attached to F(0) by a central stalk formed by the gamma and epsilon chains, while a peripheral stalk is formed by the delta and b chains.

The protein resides in the cell inner membrane. Its function is as follows. F(1)F(0) ATP synthase produces ATP from ADP in the presence of a proton or sodium gradient. F-type ATPases consist of two structural domains, F(1) containing the extramembraneous catalytic core and F(0) containing the membrane proton channel, linked together by a central stalk and a peripheral stalk. During catalysis, ATP synthesis in the catalytic domain of F(1) is coupled via a rotary mechanism of the central stalk subunits to proton translocation. Functionally, this protein is part of the stalk that links CF(0) to CF(1). It either transmits conformational changes from CF(0) to CF(1) or is implicated in proton conduction. This Sulfurihydrogenibium sp. (strain YO3AOP1) protein is ATP synthase subunit delta.